Consider the following 122-residue polypeptide: Large ribosomal subunit protein uL14 (122 aa).

It belongs to the universal ribosomal protein uL14 family. As to quaternary structure, part of the 50S ribosomal subunit. Forms a cluster with proteins L3 and L19. In the 70S ribosome, L14 and L19 interact and together make contacts with the 16S rRNA in bridges B5 and B8.

Binds to 23S rRNA. Forms part of two intersubunit bridges in the 70S ribosome. This Chlorobium limicola (strain DSM 245 / NBRC 103803 / 6330) protein is Large ribosomal subunit protein uL14.